A 20-amino-acid polypeptide reads, in one-letter code: Cytochrome c oxidase subunit 6A1, mitochondrial (20 aa).

This sequence belongs to the cytochrome c oxidase subunit 6A family. As to quaternary structure, component of the cytochrome c oxidase (complex IV, CIV), a multisubunit enzyme composed of 14 subunits. The complex is composed of a catalytic core of 3 subunits MT-CO1, MT-CO2 and MT-CO3, encoded in the mitochondrial DNA, and 11 supernumerary subunits COX4I, COX5A, COX5B, COX6A, COX6B, COX6C, COX7A, COX7B, COX7C, COX8 and NDUFA4, which are encoded in the nuclear genome. The complex exists as a monomer or a dimer and forms supercomplexes (SCs) in the inner mitochondrial membrane with NADH-ubiquinone oxidoreductase (complex I, CI) and ubiquinol-cytochrome c oxidoreductase (cytochrome b-c1 complex, complex III, CIII), resulting in different assemblies (supercomplex SCI(1)III(2)IV(1) and megacomplex MCI(2)III(2)IV(2)). In terms of tissue distribution, liver specific isoform.

The protein localises to the mitochondrion inner membrane. The protein operates within energy metabolism; oxidative phosphorylation. In terms of biological role, component of the cytochrome c oxidase, the last enzyme in the mitochondrial electron transport chain which drives oxidative phosphorylation. The respiratory chain contains 3 multisubunit complexes succinate dehydrogenase (complex II, CII), ubiquinol-cytochrome c oxidoreductase (cytochrome b-c1 complex, complex III, CIII) and cytochrome c oxidase (complex IV, CIV), that cooperate to transfer electrons derived from NADH and succinate to molecular oxygen, creating an electrochemical gradient over the inner membrane that drives transmembrane transport and the ATP synthase. Cytochrome c oxidase is the component of the respiratory chain that catalyzes the reduction of oxygen to water. Electrons originating from reduced cytochrome c in the intermembrane space (IMS) are transferred via the dinuclear copper A center (CU(A)) of subunit 2 and heme A of subunit 1 to the active site in subunit 1, a binuclear center (BNC) formed by heme A3 and copper B (CU(B)). The BNC reduces molecular oxygen to 2 water molecules unsing 4 electrons from cytochrome c in the IMS and 4 protons from the mitochondrial matrix. This chain is Cytochrome c oxidase subunit 6A1, mitochondrial (COX6A1), found in Canis lupus familiaris (Dog).